The primary structure comprises 126 residues: Holo-[acyl-carrier-protein] synthase (126 aa).

Mg(2+) is bound by residues aspartate 9 and glutamate 58.

Belongs to the P-Pant transferase superfamily. AcpS family. Mg(2+) is required as a cofactor.

It is found in the cytoplasm. It carries out the reaction apo-[ACP] + CoA = holo-[ACP] + adenosine 3',5'-bisphosphate + H(+). Functionally, transfers the 4'-phosphopantetheine moiety from coenzyme A to a Ser of acyl-carrier-protein. This Escherichia coli (strain K12 / MC4100 / BW2952) protein is Holo-[acyl-carrier-protein] synthase.